A 265-amino-acid chain; its full sequence is Tryptophan synthase alpha chain (265 aa).

Active-site proton acceptor residues include Glu-48 and Asp-59.

The protein belongs to the TrpA family. As to quaternary structure, tetramer of two alpha and two beta chains.

The catalysed reaction is (1S,2R)-1-C-(indol-3-yl)glycerol 3-phosphate + L-serine = D-glyceraldehyde 3-phosphate + L-tryptophan + H2O. It functions in the pathway amino-acid biosynthesis; L-tryptophan biosynthesis; L-tryptophan from chorismate: step 5/5. Functionally, the alpha subunit is responsible for the aldol cleavage of indoleglycerol phosphate to indole and glyceraldehyde 3-phosphate. This chain is Tryptophan synthase alpha chain, found in Ruthia magnifica subsp. Calyptogena magnifica.